Here is a 663-residue protein sequence, read N- to C-terminus: Pescadillo homolog (663 aa).

Residues 311–321 (QLKEDESKSDE) show a composition bias toward basic and acidic residues. Disordered regions lie at residues 311–360 (QLKE…YSSS), 428–447 (TNED…GPNQ), and 504–663 (AQQT…AQKA). Positions 322–334 (TAEEDAEADDEEK) are enriched in acidic residues. A BRCT domain is found at 361-477 (DPSQLFANFT…ELKSPELYAP (117 aa)). Residues 501–663 (PLEAQQTEAE…KLEKEKAQKA (163 aa)) are a coiled coil. A compositionally biased stretch (acidic residues) spans 526-567 (DGSDVENDMDVDEAEDDEEEEEGDEEDAEEAEEEDAEEDEEE). A compositionally biased stretch (basic and acidic residues) spans 591 to 620 (VDSKTKAKLEQRKALEKKAREEAEDLERAK).

The protein belongs to the pescadillo family. In terms of assembly, component of the NOP7 complex, composed of erb1, nop7 and ytm1. The complex is held together by erb1, which interacts with nop7 via its N-terminal domain and with ytm1 via a high-affinity interaction between the seven-bladed beta-propeller domains of the 2 proteins. The NOP7 complex associates with the 66S pre-ribosome.

It localises to the nucleus. It is found in the nucleolus. Its subcellular location is the nucleoplasm. Component of the NOP7 complex, which is required for maturation of the 25S and 5.8S ribosomal RNAs and formation of the 60S ribosome. The polypeptide is Pescadillo homolog (nop7) (Neurospora crassa (strain ATCC 24698 / 74-OR23-1A / CBS 708.71 / DSM 1257 / FGSC 987)).